The chain runs to 214 residues: Holliday junction branch migration complex subunit RuvA (214 aa).

The tract at residues 1-63 is domain I; it reads MISSLRGTVL…EDSLTLFGFP (63 aa). The interval 64–139 is domain II; sequence GPDELRAFEL…KLFVTQPRAR (76 aa). A flexible linker region spans residues 139–143; that stretch reads RSATS. The segment at 144-214 is domain III; the sequence is AASTVTADVV…AAPTGQAADR (71 aa).

The protein belongs to the RuvA family. As to quaternary structure, homotetramer. Forms an RuvA(8)-RuvB(12)-Holliday junction (HJ) complex. HJ DNA is sandwiched between 2 RuvA tetramers; dsDNA enters through RuvA and exits via RuvB. An RuvB hexamer assembles on each DNA strand where it exits the tetramer. Each RuvB hexamer is contacted by two RuvA subunits (via domain III) on 2 adjacent RuvB subunits; this complex drives branch migration. In the full resolvosome a probable DNA-RuvA(4)-RuvB(12)-RuvC(2) complex forms which resolves the HJ.

It is found in the cytoplasm. In terms of biological role, the RuvA-RuvB-RuvC complex processes Holliday junction (HJ) DNA during genetic recombination and DNA repair, while the RuvA-RuvB complex plays an important role in the rescue of blocked DNA replication forks via replication fork reversal (RFR). RuvA specifically binds to HJ cruciform DNA, conferring on it an open structure. The RuvB hexamer acts as an ATP-dependent pump, pulling dsDNA into and through the RuvAB complex. HJ branch migration allows RuvC to scan DNA until it finds its consensus sequence, where it cleaves and resolves the cruciform DNA. The polypeptide is Holliday junction branch migration complex subunit RuvA (Clavibacter michiganensis subsp. michiganensis (strain NCPPB 382)).